A 410-amino-acid polypeptide reads, in one-letter code: Chorismate synthase (410 aa).

Arg40 and Arg46 together coordinate NADP(+). Residues 129–131 (RSS), 257–258 (QA), Gly302, 317–321 (KPISS), and Arg343 contribute to the FMN site.

Belongs to the chorismate synthase family. Homotetramer. It depends on FMNH2 as a cofactor.

It catalyses the reaction 5-O-(1-carboxyvinyl)-3-phosphoshikimate = chorismate + phosphate. It participates in metabolic intermediate biosynthesis; chorismate biosynthesis; chorismate from D-erythrose 4-phosphate and phosphoenolpyruvate: step 7/7. In terms of biological role, catalyzes the anti-1,4-elimination of the C-3 phosphate and the C-6 proR hydrogen from 5-enolpyruvylshikimate-3-phosphate (EPSP) to yield chorismate, which is the branch point compound that serves as the starting substrate for the three terminal pathways of aromatic amino acid biosynthesis. This reaction introduces a second double bond into the aromatic ring system. The protein is Chorismate synthase of Chlorobaculum parvum (strain DSM 263 / NCIMB 8327) (Chlorobium vibrioforme subsp. thiosulfatophilum).